The following is a 264-amino-acid chain: 2-dehydro-3-deoxy-D-gluconate 5-dehydrogenase (264 aa).

14–38 is a binding site for NAD(+); the sequence is LVTGSTHGLGMAMAKGLGLAGATIV. A substrate-binding site is contributed by Ser147. Tyr160 acts as the Proton acceptor in catalysis.

It belongs to the short-chain dehydrogenases/reductases (SDR) family. As to quaternary structure, homotetramer.

The protein localises to the cytoplasm. The catalysed reaction is 2-dehydro-3-deoxy-D-gluconate + NAD(+) = 3-deoxy-D-glycero-2,5-hexodiulosonate + NADH + H(+). 2-dehydro-3-deoxy-D-gluconate 5-dehydrogenase involved in ulvan degradation. Ulvan is the main polysaccharide component of the Ulvales (green seaweed) cell wall. It is composed of disaccharide building blocks comprising 3-sulfated rhamnose (Rha3S) linked to D-glucuronic acid (GlcA), L-iduronic acid (IduA), or D-xylose (Xyl). Catalyzes the reversible reduction of 2,5-diketo-3-deoxygluconate (DKII or 4,6-dihydroxy-2,5-dioxohexanoate) into 2-keto-3-deoxygluconate (KDG or 2-dehydro-3-deoxygluconate) with a concomitant oxidation of NADH. This Formosa agariphila (strain DSM 15362 / KCTC 12365 / LMG 23005 / KMM 3901 / M-2Alg 35-1) protein is 2-dehydro-3-deoxy-D-gluconate 5-dehydrogenase (kduD).